A 402-amino-acid chain; its full sequence is La-related protein 7 homolog (402 aa).

The interval glutamate 64 to arginine 138 is HTH La-type RNA-binding-like region. Positions isoleucine 148–glutamate 230 are RRM-like region. The xRRM-like region stretch occupies residues aspartate 288–leucine 400. The region spanning aspartate 288–lysine 402 is the xRRM domain.

Belongs to the LARP7 family. As to quaternary structure, component of the telomerase holoenzyme complex composed minimally of trt1 and the telomerase RNA template component. Interacts with skp1.

The protein resides in the chromosome. It is found in the telomere. The protein localises to the nucleus. Its subcellular location is the cytoplasm. Functionally, RNA-binding protein required for assembly of the holoenzyme telomerase ribonucleoprotein (RNP) complex. Specifically binds telomerase RNA ter1 and promotes assembly of ter1 with catalytic subunit trt1. Telomerase is a ribonucleoprotein enzyme essential that copies new telomeric repeats onto chromosome ends and functions to maintain cell division. The polypeptide is La-related protein 7 homolog (Schizosaccharomyces pombe (strain 972 / ATCC 24843) (Fission yeast)).